The following is a 281-amino-acid chain: Undecaprenyl-diphosphatase (281 aa).

Transmembrane regions (helical) follow at residues 5–25 (LFVL…FLPI), 48–68 (VKMY…LLYW), 92–112 (FWFM…LLDA), 118–138 (LMTP…MIYA), 154–174 (VTPK…IPGM), 192–212 (VVAA…YSLL), 226–246 (AELI…VAVI), and 261–281 (FAIY…MGFF).

Belongs to the UppP family.

It localises to the cell membrane. The catalysed reaction is di-trans,octa-cis-undecaprenyl diphosphate + H2O = di-trans,octa-cis-undecaprenyl phosphate + phosphate + H(+). Catalyzes the dephosphorylation of undecaprenyl diphosphate (UPP). Confers resistance to bacitracin. The protein is Undecaprenyl-diphosphatase of Ruminiclostridium cellulolyticum (strain ATCC 35319 / DSM 5812 / JCM 6584 / H10) (Clostridium cellulolyticum).